The sequence spans 352 residues: Heat-inducible transcription repressor HrcA (352 aa).

It belongs to the HrcA family.

Negative regulator of class I heat shock genes (grpE-dnaK-dnaJ and groELS operons). Prevents heat-shock induction of these operons. The protein is Heat-inducible transcription repressor HrcA of Chlorobium phaeobacteroides (strain BS1).